Here is a 730-residue protein sequence, read N- to C-terminus: MSRRDQMVKKIKDLMYKPDYIRNIGIVAHIDHGKTTLSDNLLAAAGMISSELAGDQRFLDFDEQEQERGITIDAANVSMVHSYEDNEYLINLIDTPGHVDFGGDVTRAMRAVDGAVVVVCAVEGVMPQTETVLRQALKENVRPVLFINKVDRLINELKLDDAELQNRFVKIIAGVNKLIKNMAPEQYKTEWQVKIEDGTVAFGSAYHNWAINVPEMLKTNITFKDIIQYCNEDNQKELAQKIKIEEVILGMVVEHLPSPKVAQEYRVPKIWSGDIESVEGQGMIATDSTSPLAVMVTDVSIDKHAGEIATGRVYGGSIEKGSEIFFVGSMSKARTQQVGVYMGPERINTDSVPAGNIVAITGARGAIAGETITDADHNIAPFESLEHISEPVVTVAVEAKNTKDLPKLIEVLRQVGKEDPTLRVEINEETGEHLIAGMGELHLEVIIYRINDKGLEVETSEPIVVYRETIAGTATNVEGKSPNKHNRFYIDIEPLSDDLMNAISEGEIPEGRVKGKELAKTFQEHGLDKDEAKKVWDVYKHSIFVNKTRGIQYLDEIKELLMEGFESALDDGPLANEKAMGIKISLMDAKIHEDAVHRGPAQVLPAIRKAVYGAIMLAQPTLMEPMQKVYISVPQDYMGAATREVQNRRGQIVEMGQEGDMSTIESKVPVSEMFGFAGDIRSAAEGRCIWSTENSGFERIPRELQNKIVKEIRERKGLTPEPYGPDHYLG.

Positions 19-229 constitute a tr-type G domain; the sequence is DYIRNIGIVA…NITFKDIIQY (211 aa). GTP is bound by residues 28–35, 94–98, and 148–151; these read AHIDHGKT, DTPGH, and NKVD. His-597 is modified (diphthamide).

Belongs to the TRAFAC class translation factor GTPase superfamily. Classic translation factor GTPase family. EF-G/EF-2 subfamily.

The protein localises to the cytoplasm. Functionally, catalyzes the GTP-dependent ribosomal translocation step during translation elongation. During this step, the ribosome changes from the pre-translocational (PRE) to the post-translocational (POST) state as the newly formed A-site-bound peptidyl-tRNA and P-site-bound deacylated tRNA move to the P and E sites, respectively. Catalyzes the coordinated movement of the two tRNA molecules, the mRNA and conformational changes in the ribosome. This chain is Elongation factor 2, found in Methanosphaera stadtmanae (strain ATCC 43021 / DSM 3091 / JCM 11832 / MCB-3).